Consider the following 181-residue polypeptide: dCTP deaminase (181 aa).

DCTP is bound by residues 100 to 105 (RSTFAR) and aspartate 116. Glutamate 126 serves as the catalytic Proton donor/acceptor. DCTP-binding residues include tyrosine 158 and glutamine 165. The interval 160-181 (GKYQGQRGVTPPKLDNSSSKNF) is disordered.

Belongs to the dCTP deaminase family. Homotrimer.

It catalyses the reaction dCTP + H2O + H(+) = dUTP + NH4(+). Its pathway is pyrimidine metabolism; dUMP biosynthesis; dUMP from dCTP (dUTP route): step 1/2. In terms of biological role, catalyzes the deamination of dCTP to dUTP. This is dCTP deaminase from Desulfurococcus amylolyticus (strain DSM 18924 / JCM 16383 / VKM B-2413 / 1221n) (Desulfurococcus kamchatkensis).